Consider the following 436-residue polypeptide: Methylenetetrahydrofolate--tRNA-(uracil-5-)-methyltransferase TrmFO (436 aa).

9 to 14 (GAGLAG) is an FAD binding site.

This sequence belongs to the MnmG family. TrmFO subfamily. FAD serves as cofactor.

It is found in the cytoplasm. It carries out the reaction uridine(54) in tRNA + (6R)-5,10-methylene-5,6,7,8-tetrahydrofolate + NADH + H(+) = 5-methyluridine(54) in tRNA + (6S)-5,6,7,8-tetrahydrofolate + NAD(+). The enzyme catalyses uridine(54) in tRNA + (6R)-5,10-methylene-5,6,7,8-tetrahydrofolate + NADPH + H(+) = 5-methyluridine(54) in tRNA + (6S)-5,6,7,8-tetrahydrofolate + NADP(+). Catalyzes the folate-dependent formation of 5-methyl-uridine at position 54 (M-5-U54) in all tRNAs. The polypeptide is Methylenetetrahydrofolate--tRNA-(uracil-5-)-methyltransferase TrmFO (Acetivibrio thermocellus (strain ATCC 27405 / DSM 1237 / JCM 9322 / NBRC 103400 / NCIMB 10682 / NRRL B-4536 / VPI 7372) (Clostridium thermocellum)).